The primary structure comprises 202 residues: uncharacterized protein (202 aa).

Disordered stretches follow at residues 1-32 (MRPE…ASLG) and 46-95 (PSSV…PSYT). Positions 47–79 (SSVSLSSSSSRRSMPSLGSSRSSSLPSTGSLRS) are enriched in low complexity.

This is an uncharacterized protein from Equus caballus (Horse).